We begin with the raw amino-acid sequence, 417 residues long: Gamma-glutamyl phosphate reductase (417 aa).

It belongs to the gamma-glutamyl phosphate reductase family.

It is found in the cytoplasm. The catalysed reaction is L-glutamate 5-semialdehyde + phosphate + NADP(+) = L-glutamyl 5-phosphate + NADPH + H(+). The protein operates within amino-acid biosynthesis; L-proline biosynthesis; L-glutamate 5-semialdehyde from L-glutamate: step 2/2. In terms of biological role, catalyzes the NADPH-dependent reduction of L-glutamate 5-phosphate into L-glutamate 5-semialdehyde and phosphate. The product spontaneously undergoes cyclization to form 1-pyrroline-5-carboxylate. This is Gamma-glutamyl phosphate reductase from Hydrogenovibrio crunogenus (strain DSM 25203 / XCL-2) (Thiomicrospira crunogena).